Consider the following 471-residue polypeptide: MSQNTGKITQVIGAVVDVEFEPGKLPEIYHALRVTNPAINDSENNLVLEVAQHLGENSVRTIAMDSTDGLKRGQAVLDTGKQICAPVGKKTLGRIINVIGEPVDEMGPIGNDKENPIHREAPPFEDQSTKVEAFTTGIKVVDLLAPYARGGKIGLFGGAGVGKTVLIMELINNIARQHGGFSVFAGVGERTREGNDLWMEMKETGVLEKTALVYGQMNEPPGARARVALTALSIAEHFRDDEGLDVLLFIDNIFRFTQAGSEVSALLGRIPSAVGYQPTLATEMGELQERITSTKNGSITSVQAIYVPADDLTDPAPATAFAHLDATTVLSRQIAELGIYPAVDPLDSTSRILDPQVIGEEHYAIARQVQYILQKYKDLQDIIAILGMDELSEEDKLIVARARKIQRFLSQPFFVAEVFTGSPGKYVELKDTIKGFQEIVSGKHDHLPEQAFYMVGSIEEAVEKAAKLAAV.

ATP is bound at residue 157–164 (GGAGVGKT).

Belongs to the ATPase alpha/beta chains family. F-type ATPases have 2 components, CF(1) - the catalytic core - and CF(0) - the membrane proton channel. CF(1) has five subunits: alpha(3), beta(3), gamma(1), delta(1), epsilon(1). CF(0) has three main subunits: a(1), b(2) and c(9-12). The alpha and beta chains form an alternating ring which encloses part of the gamma chain. CF(1) is attached to CF(0) by a central stalk formed by the gamma and epsilon chains, while a peripheral stalk is formed by the delta and b chains.

It localises to the cell inner membrane. It carries out the reaction ATP + H2O + 4 H(+)(in) = ADP + phosphate + 5 H(+)(out). Produces ATP from ADP in the presence of a proton gradient across the membrane. The catalytic sites are hosted primarily by the beta subunits. The protein is ATP synthase subunit beta 1 of Pelobacter propionicus (strain DSM 2379 / NBRC 103807 / OttBd1).